Here is a 414-residue protein sequence, read N- to C-terminus: Dothistromin biosynthesis peroxidase dotB (414 aa).

A signal peptide spans 1 to 18 (MHFFSAIVLTCLASTAVA). A heme-binding site is contributed by Cys-72. Residues Asn-187, Asn-241, and Asn-328 are each glycosylated (N-linked (GlcNAc...) asparagine).

The protein belongs to the chloroperoxidase family. Heme b serves as cofactor.

The protein operates within mycotoxin biosynthesis. Peroxidase; part of the fragmented gene cluster that mediates the biosynthesis of dothistromin (DOTH), a polyketide toxin very similar in structure to the aflatoxin precursor, versicolorin B. The first step of the pathway is the conversion of acetate to norsolorinic acid (NOR) and requires the fatty acid synthase subunits hexA and hexB, as well as the polyketide synthase pksA. PksA combines a hexanoyl starter unit and 7 malonyl-CoA extender units to synthesize the precursor NOR. The hexanoyl starter unit is provided to the acyl-carrier protein (ACP) domain by the fungal fatty acid synthase hexA/hexB. The second step is the conversion of NOR to averantin (AVN) and requires the norsolorinic acid ketoreductase nor1, which catalyzes the dehydration of norsolorinic acid to form (1'S)-averantin. The cytochrome P450 monooxygenase avnA then catalyzes the hydroxylation of AVN to 5'hydroxyaverantin (HAVN). The next step is performed by adhA that transforms HAVN to averufin (AVF). Averufin might then be converted to hydroxyversicolorone by cypX and avfA. Hydroxyversicolorone is further converted versiconal hemiacetal acetate (VHA) by moxY. VHA is then the substrate for the versiconal hemiacetal acetate esterase est1 to yield versiconal (VAL). Versicolorin B synthase vbsA then converts VAL to versicolorin B (VERB) by closing the bisfuran ring. Then, the activity of the versicolorin B desaturase verB leads to versicolorin A (VERA). DotB, a predicted chloroperoxidase, may perform epoxidation of the A-ring of VERA. Alternatively, a cytochrome P450, such as cypX or avnA could catalyze this step. It is also possible that another, uncharacterized, cytochrome P450 enzyme is responsible for this step. Opening of the epoxide could potentially be achieved by the epoxide hydrolase epoA. However, epoA seems not to be required for DOTH biosynthesis, but other epoxide hydrolases may have the ability to complement this hydrolysis. Alternatively, opening of the epoxide ring could be achieved non-enzymatically. The next step is the deoxygenation of ring A to yield the 5,8-dihydroxyanthraquinone which is most likely catalyzed by the NADPH dehydrogenase encoded by ver1. The last stages of DOTH biosynthesis are proposed to involve hydroxylation of the bisfuran. OrdB and norB might have oxidative roles here. An alternative possibility is that cytochrome P450 monoogenases such as avnA and cypX might perform these steps in addition to previously proposed steps. The chain is Dothistromin biosynthesis peroxidase dotB from Dothistroma septosporum (Red band needle blight fungus).